Here is a 189-residue protein sequence, read N- to C-terminus: 5-hmdU DNA kinase (189 aa).

This sequence belongs to the thymidylate kinase family. 5-hmdU DNA kinase subfamily.

It catalyses the reaction 5-hydroxymethyl-dUMP in DNA + ATP = 5-phosphomethyl-dUMP in DNA + ADP + H(+). Its function is as follows. Phosphorylates 5-hydroxymethyluracil (5hmdU) into 5-phosphomethyl-2'-deoxyuridine (5- PmdU) on DNA as a step in the pathway leading to thymidine hypermodifications in the viral genome. The phosphate is added internally to the DNA polymer. As a final result of the pathway of hypermodification, 5-AcNmdU substitutes for a subset of thymidines in the viral DNA. These modifications probably prevent degradation of viral genome by the host restriction-modification antiviral defense system. This chain is 5-hmdU DNA kinase, found in Pseudomonas phage PaMx11.